The following is a 477-amino-acid chain: Cysteine--tRNA ligase (477 aa).

Cysteine 28 provides a ligand contact to Zn(2+). A 'HIGH' region motif is present at residues 30–40; that stretch reads PTVYDYAHIGN. Positions 213, 238, and 242 each coordinate Zn(2+). The 'KMSKS' region signature appears at 270-274; the sequence is KMSKS. Lysine 273 contacts ATP.

It belongs to the class-I aminoacyl-tRNA synthetase family. Monomer. Zn(2+) is required as a cofactor.

It localises to the cytoplasm. The enzyme catalyses tRNA(Cys) + L-cysteine + ATP = L-cysteinyl-tRNA(Cys) + AMP + diphosphate. This Chlamydia trachomatis serovar A (strain ATCC VR-571B / DSM 19440 / HAR-13) protein is Cysteine--tRNA ligase.